Here is a 161-residue protein sequence, read N- to C-terminus: Calcium-binding protein CML24 (161 aa).

4 EF-hand domains span residues 13–48, 49–84, 90–125, and 126–161; these read GSMD…LSPT, ASPE…GIGG, NDVS…LGEK, and CSVQ…GGGA. Residues Asp26, Asn28, Asp30, Lys32, Glu37, Asp62, Asp64, Asn66, Glu73, Asp103, Asp105, Asn107, Arg109, Glu114, Asp139, Asp141, Asp143, Cys145, and Glu150 each coordinate Ca(2+).

In terms of tissue distribution, expressed in seed coat, seedling radical, cotyledons, hypocotyl, shoot apex and elongating root. Expressed in the vasculature of cotyledons, leaves and roots. Highly expressed in guard cells, trichomes and hydathodes. Expressed in inflorescence stem branch points, silique abscission zone, young and mature styles and stigmatic papillae, mature anthers and developing seed.

Its function is as follows. Calcium-binding protein that may positively regulate abscisic acid (ABA) inhibition of germination and seedling development. May be required for photoperiod-induced flowering and function in ion homeostasis. The polypeptide is Calcium-binding protein CML24 (CML24) (Arabidopsis thaliana (Mouse-ear cress)).